Reading from the N-terminus, the 71-residue chain is Conotoxin AbVIG (71 aa).

The first 17 residues, 1 to 17, serve as a signal peptide directing secretion; it reads VLIIAVLFLTACQLTTA. Positions 18 to 40 are excised as a propeptide; the sequence is ETSSRGKQKHRALRSTDKNSRMT. 3 disulfides stabilise this stretch: C43–C57, C50–C61, and C56–C68.

It belongs to the conotoxin O1 superfamily. Expressed by the venom duct.

It localises to the secreted. The sequence is that of Conotoxin AbVIG from Conus abbreviatus (Abbreviated cone).